A 494-amino-acid chain; its full sequence is 3-octaprenyl-4-hydroxybenzoate carboxy-lyase (494 aa).

Asparagine 172 serves as a coordination point for Mn(2+). Prenylated FMN is bound by residues 175–177 (IYR), 189–191 (RWL), and 194–195 (RG). Residue glutamate 238 coordinates Mn(2+). The Proton donor role is filled by aspartate 294.

Belongs to the UbiD family. In terms of assembly, homohexamer. The cofactor is prenylated FMN. Requires Mn(2+) as cofactor.

It is found in the cell membrane. The catalysed reaction is a 4-hydroxy-3-(all-trans-polyprenyl)benzoate + H(+) = a 2-(all-trans-polyprenyl)phenol + CO2. It functions in the pathway cofactor biosynthesis; ubiquinone biosynthesis. Its function is as follows. Catalyzes the decarboxylation of 3-octaprenyl-4-hydroxy benzoate to 2-octaprenylphenol, an intermediate step in ubiquinone biosynthesis. The protein is 3-octaprenyl-4-hydroxybenzoate carboxy-lyase of Albidiferax ferrireducens (strain ATCC BAA-621 / DSM 15236 / T118) (Rhodoferax ferrireducens).